Reading from the N-terminus, the 346-residue chain is tRNA pseudouridine synthase D (346 aa).

D81 acts as the Nucleophile in catalysis. Residues 157–303 (GVPNYFGLQR…MKHERRILRL (147 aa)) form the TRUD domain.

Belongs to the pseudouridine synthase TruD family.

It carries out the reaction uridine(13) in tRNA = pseudouridine(13) in tRNA. In terms of biological role, responsible for synthesis of pseudouridine from uracil-13 in transfer RNAs. The chain is tRNA pseudouridine synthase D from Stutzerimonas stutzeri (strain A1501) (Pseudomonas stutzeri).